The chain runs to 349 residues: Threonine-rich protein (349 aa).

The N-terminal stretch at 1–19 is a signal peptide; it reads MKGLTLACIAATVVAASHA. The N-linked (GlcNAc...) asparagine glycan is linked to asparagine 257. The interval 300 to 326 is disordered; sequence QPDVSPMSVRKRRQAESAEEDDDLVGD. The span at 316-326 shows a compositional bias: acidic residues; the sequence is SAEEDDDLVGD. The stretch at 316-349 forms a coiled coil; sequence SAEEDDDLVGDMEDLKELEQEIQEALEEVEKLDV.

As to expression, component of the acid-insoluble and acid-soluble organic matrix of calcified layers of the shell (at protein level).

The protein resides in the secreted. The chain is Threonine-rich protein from Lottia gigantea (Giant owl limpet).